Consider the following 123-residue polypeptide: ATP synthase epsilon chain (123 aa).

It belongs to the ATPase epsilon chain family. In terms of assembly, F-type ATPases have 2 components, CF(1) - the catalytic core - and CF(0) - the membrane proton channel. CF(1) has five subunits: alpha(3), beta(3), gamma(1), delta(1), epsilon(1). CF(0) has three main subunits: a, b and c.

The protein resides in the cell inner membrane. Functionally, produces ATP from ADP in the presence of a proton gradient across the membrane. The protein is ATP synthase epsilon chain of Helicobacter pylori (strain HPAG1).